Reading from the N-terminus, the 642-residue chain is DNA gyrase subunit B (642 aa).

In terms of domain architecture, Toprim spans 422–536; the sequence is CELFIVEGDS…AGYVYIAQPP (115 aa). The Mg(2+) site is built by E428, D501, and D503.

It belongs to the type II topoisomerase family. As to quaternary structure, heterotetramer, composed of two GyrA and two GyrB chains. Within the heterotetramer, GyrA contains the active site tyrosine that forms a covalent intermediate with the DNA, while GyrB contributes the cofactor binding sites and catalyzes ATP hydrolysis. Requires Mg(2+) as cofactor. Mn(2+) is required as a cofactor. It depends on Ca(2+) as a cofactor.

It is found in the cytoplasm. The enzyme catalyses ATP-dependent breakage, passage and rejoining of double-stranded DNA.. Pyrrolopyrimidines inhibit both GyrB and its paralog in topoisomerase IV (parE). In terms of biological role, DNA gyrase negatively supercoils closed circular double-stranded DNA in an ATP-dependent manner and also catalyzes the interconversion of other topological isomers of double-stranded DNA rings, including catenanes and knotted rings. This chain is DNA gyrase subunit B, found in Enterococcus faecalis (strain ATCC 700802 / V583).